We begin with the raw amino-acid sequence, 682 residues long: Pneumocandin biosynthesis cluster protein B (682 aa).

Residues 63–73 (SSLSSTEVTSS) are compositionally biased toward low complexity. Disordered stretches follow at residues 63–86 (SSLS…DAPE), 107–129 (QNTP…DTNQ), and 251–358 (SEST…SPAN). Composition is skewed to polar residues over residues 257-279 (NTGS…SHSS) and 310-320 (PRQTTEATPCD). Basic and acidic residues predominate over residues 335 to 349 (PERRSMKMVRKEARD).

In terms of biological role, part of the gene cluster that mediates the biosynthesis of pneumocandins, lipohexapeptides of the echinocandin family that prevent fungal cell wall formation by non-competitive inhibition of beta-1,3-glucan synthase. The 10,12-dimethylmyristoyl side chain is synthesized by the reducing polyketide synthase gloL/GLPKS4. The thioesterase gloN/GLHYD exclusively interacts with gloL/GLPKS4 to maintain turnover of the polyketide side chain. The 10R,12S-dimethylmyristic acid is then transferred to the first thiolation domain of the nonribosomal peptide synthetase gloA/GLNRPS4 by the acyl-AMP ligase gloD/GLligase, followed by its acylation to L-ornithine to trigger elongation of the cyclic hexapeptide. L-ornithine, 4R-hydroxyl-L-proline (generated from L-proline by the dioxygenase gloF/GLOXY2), 3S-hydroxyl-L-homotyrosine (generated by gloG/GLHtyB, gloH/GLHtyA, gloI/GLHtyC, gloJ/GLHtyD and hydroxylated at C-3 by the dioxygenase gloM/GLOXY1), 3R-hydroxyl-L-glutamine (generated from L-glutamine probably by the dioxygenase gloE/GLOXY3) and 3S-hydroxyl-L-proline (generated from L-proline by the dioxygenase gloF/GLOXY2 to yield pneumocandin B0), or 3S-hydroxyl-4S-methyl-L-proline (generated from L-leucine by the dioxygenase gloC/GLOXY4 to yield pneumocandin A0) are sequentially added to the growing chain. The last C domain of gloA/GLNRPS4 is proposed to be responsible for cyclization by condensation to form the peptide bond between L-ornithine and 3S-hydroxyl-4S-methyl-L-proline (for pneumocandin A0) or 3S-hydroxyl-L-proline (for pneumocandin B0). Finally, the subsequent C-4 hydroxylation of 3S-hydroxyl-L-homotyrosine and L-ornithine dihydroxylation at C-4 and C-5 are performed by the cytochrome P450 monooxygenases gloP/GLP450-1 and gloO/GLP450-2, respectively. In Glarea lozoyensis (strain ATCC 20868 / MF5171), this protein is Pneumocandin biosynthesis cluster protein B.